The sequence spans 93 residues: Small ribosomal subunit protein uS19 (93 aa).

The protein belongs to the universal ribosomal protein uS19 family.

In terms of biological role, protein S19 forms a complex with S13 that binds strongly to the 16S ribosomal RNA. The sequence is that of Small ribosomal subunit protein uS19 from Clostridium acetobutylicum (strain ATCC 824 / DSM 792 / JCM 1419 / IAM 19013 / LMG 5710 / NBRC 13948 / NRRL B-527 / VKM B-1787 / 2291 / W).